A 466-amino-acid chain; its full sequence is GTPase Der (466 aa).

2 EngA-type G domains span residues 3–166 and 177–350; these read PVIA…PEIP and IKIA…QSAT. Residues 9–16, 56–60, 118–121, 183–190, 230–234, and 295–298 contribute to the GTP site; these read GRPNVGKS, DTGGI, NKID, DTAGV, and NKWD. The region spanning 351–435 is the KH-like domain; the sequence is DRFSTNYLTR…PIRIEFRTTD (85 aa). Positions 442 to 466 are disordered; the sequence is KKSMTRQQFIQKRRKEERDRNNPRR. A compositionally biased stretch (basic and acidic residues) spans 455 to 466; it reads RKEERDRNNPRR.

The protein belongs to the TRAFAC class TrmE-Era-EngA-EngB-Septin-like GTPase superfamily. EngA (Der) GTPase family. Associates with the 50S ribosomal subunit.

GTPase that plays an essential role in the late steps of ribosome biogenesis. The polypeptide is GTPase Der (Cellvibrio japonicus (strain Ueda107) (Pseudomonas fluorescens subsp. cellulosa)).